Here is a 589-residue protein sequence, read N- to C-terminus: Delta-like protein 3 (589 aa).

The first 32 residues, 1–32 (MVSLQVSSLPQTLILAFLLPQALPAGVFELQI), serve as a signal peptide directing secretion. The Extracellular segment spans residues 33-494 (HSFGPGPGPG…LRQADSQRFL (462 aa)). A DSL domain is found at 174 to 213 (ARCEPPAVGAACARLCRSRSAPSRCGPGLRPCTPFPDECE). 6 EGF-like domains span residues 218-251 (SLTV…PLCT), 276-312 (GPGP…PRCE), 314-353 (SGVT…SNCE), 355-391 (RVDR…PRCE), 393-429 (DLDD…RDCR), and 431-467 (RADP…VRCE). 18 cysteine pairs are disulfide-bonded: cysteine 222–cysteine 233, cysteine 226–cysteine 239, cysteine 241–cysteine 250, cysteine 280–cysteine 291, cysteine 285–cysteine 300, cysteine 302–cysteine 311, cysteine 318–cysteine 329, cysteine 323–cysteine 341, cysteine 343–cysteine 352, cysteine 359–cysteine 370, cysteine 364–cysteine 379, cysteine 381–cysteine 390, cysteine 397–cysteine 408, cysteine 402–cysteine 417, cysteine 419–cysteine 428, cysteine 435–cysteine 446, cysteine 440–cysteine 455, and cysteine 457–cysteine 466. Residues 495–515 (LPPALGLLAAAALAGAALLLI) traverse the membrane as a helical segment. Over 516-589 (HVRRRGPGRD…PAPSIYAREA (74 aa)) the chain is Cytoplasmic. Residues 552-574 (QDGAGDGPTSSADWNHPEDGDSR) form a disordered region.

As to quaternary structure, can bind and activate Notch-1 or another Notch receptor. In terms of processing, ubiquitinated by MIB (MIB1 or MIB2), leading to its endocytosis and subsequent degradation.

The protein resides in the membrane. Its function is as follows. Inhibits primary neurogenesis. May be required to divert neurons along a specific differentiation pathway. Plays a role in the formation of somite boundaries during segmentation of the paraxial mesoderm. The chain is Delta-like protein 3 (Dll3) from Rattus norvegicus (Rat).